Here is a 671-residue protein sequence, read N- to C-terminus: Talaropentaene synthase (671 aa).

Residue D92 coordinates Mg(2+). A DDXXD 1 motif is present at residues 92–96 (DDMTD). Positions 223–231 (NDLYSYEKE) match the NSE/DTE motif. 3 residues coordinate isopentenyl diphosphate: K389, R392, and H421. Residues D428 and D432 each contribute to the Mg(2+) site. Positions 428–432 (DDIED) match the DDXXD 2 motif. R437 contributes to the dimethylallyl diphosphate binding site. R438 serves as a coordination point for isopentenyl diphosphate. Residues K515, T516, Q551, N558, K568, and K578 each contribute to the dimethylallyl diphosphate site.

It in the N-terminal section; belongs to the terpene synthase family. In the C-terminal section; belongs to the FPP/GGPP synthase family. Requires Mg(2+) as cofactor.

The enzyme catalyses 5 isopentenyl diphosphate + dimethylallyl diphosphate = all-trans-hexaprenyl diphosphate + 5 diphosphate. It carries out the reaction all-trans-hexaprenyl diphosphate = talaropentaene + diphosphate. Functionally, bifunctional terpene synthase that converts dimethylallyl diphosphate (DMAPP) and isopentenyl diphosphate (IPP) into talaropentaene as a single product. The C-terminal prenyltransferase (PT) domain of MpMS catalyzes formation of hexaprenyl diphosphate (HexPP), whereas the N-terminal terpene cyclase (TC) domain catalyzes the cyclization of HexPP to talaropentaene. This is Talaropentaene synthase from Talaromyces verruculosus (Penicillium verruculosum).